The primary structure comprises 66 residues: DNA-directed RNA polymerase subunit Rpo10 (66 aa).

Zn(2+) contacts are provided by Cys7, Cys10, Cys44, and Cys45.

The protein belongs to the archaeal Rpo10/eukaryotic RPB10 RNA polymerase subunit family. In terms of assembly, part of the RNA polymerase complex. Zn(2+) serves as cofactor.

Its subcellular location is the cytoplasm. The enzyme catalyses RNA(n) + a ribonucleoside 5'-triphosphate = RNA(n+1) + diphosphate. Functionally, DNA-dependent RNA polymerase (RNAP) catalyzes the transcription of DNA into RNA using the four ribonucleoside triphosphates as substrates. The sequence is that of DNA-directed RNA polymerase subunit Rpo10 from Sulfurisphaera tokodaii (strain DSM 16993 / JCM 10545 / NBRC 100140 / 7) (Sulfolobus tokodaii).